The following is a 371-amino-acid chain: tRNA (guanine(26)-N(2))-dimethyltransferase (371 aa).

The Trm1 methyltransferase domain occupies 1–370 (MDVSEGGVTV…GGLAEVEAAV (370 aa)). Positions 36, 66, 81, 107, and 108 each coordinate S-adenosyl-L-methionine. Zn(2+)-binding residues include C238, C241, C258, and C261.

The protein belongs to the class I-like SAM-binding methyltransferase superfamily. Trm1 family.

It catalyses the reaction guanosine(26) in tRNA + 2 S-adenosyl-L-methionine = N(2)-dimethylguanosine(26) in tRNA + 2 S-adenosyl-L-homocysteine + 2 H(+). Dimethylates a single guanine residue at position 26 of a number of tRNAs using S-adenosyl-L-methionine as donor of the methyl groups. The sequence is that of tRNA (guanine(26)-N(2))-dimethyltransferase from Halobacterium salinarum (strain ATCC 700922 / JCM 11081 / NRC-1) (Halobacterium halobium).